A 184-amino-acid chain; its full sequence is Late embryogenesis abundant protein (184 aa).

The disordered stretch occupies residues 49–184; that stretch reads TGNIAEYPTE…KLPGHHNHHP (136 aa). Low complexity predominate over residues 60-86; the sequence is PPAGVAAGTGAAATTAAGVTTSETTTG. 2 stretches are compositionally biased toward basic and acidic residues: residues 87 to 98 and 122 to 138; these read QEHHGSLGEHLR and KDKIKDKLGGGKHKDEQ. Low complexity predominate over residues 139 to 159; the sequence is TPTTATTTGPTTTTTTTGAAA. A compositionally biased stretch (basic and acidic residues) spans 160 to 177; the sequence is DQHHEKKGILEKIKEKLP.

The protein belongs to the plant dehydrin family.

Functionally, LEA protein are late embryogenesis abundant in higher plant seed embryos. There are two subsets of LEA proteins (5a, and 5b), the first ones are expressed when the cotyledon weight reach 80 mg and the second set are expressed above 100 mg. The function of those proteins is not known. The polypeptide is Late embryogenesis abundant protein (Raphanus sativus (Radish)).